A 207-amino-acid chain; its full sequence is 2,3-bisphosphoglycerate-dependent phosphoglycerate mutase (207 aa).

Substrate is bound by residues 10 to 17, 23 to 24, R62, 89 to 92, K100, 116 to 117, and 160 to 161; these read RHGQSEWN, TG, ERDY, RR, and GN. Residue H11 is the Tele-phosphohistidine intermediate of the active site. The active-site Proton donor/acceptor is the E89.

This sequence belongs to the phosphoglycerate mutase family. BPG-dependent PGAM subfamily. Homodimer.

It carries out the reaction (2R)-2-phosphoglycerate = (2R)-3-phosphoglycerate. Its pathway is carbohydrate degradation; glycolysis; pyruvate from D-glyceraldehyde 3-phosphate: step 3/5. Catalyzes the interconversion of 2-phosphoglycerate and 3-phosphoglycerate. The sequence is that of 2,3-bisphosphoglycerate-dependent phosphoglycerate mutase from Bradyrhizobium sp. (strain ORS 278).